The following is a 491-amino-acid chain: MDSSDNKAATDEEIRRALKAADLMKILDGKMALGNKSGTKNLGEHKFWKTQPVPQITGSGASAPMEEGPIDDPKTPADVKQEPGVLPAGFEWSTIDINDEEQSKEVYVLLCENYVEDDDAMFRFNYSREFLLWALTAPGYLPDWHIGVRVQKTKKLVAFISGIKIDIRVRAKTFPAAEINFLCVHKKLRSKRLAPVLIKEVTRRVNLTNIWQAIYTAGVILPTPIGTCRYFHRNLNPPKLVDIGFSPLPRGSTIARLVQQYSVPSHPRIPGFREMKKEDVPQVGALLRRYLDRFDVAQAFKDDDEVEHWFLSGQGKEVGGRRVEQVVWAYVVEDPTTHRITDLISFYALPSTIMKHPKHNLLNAAYMFYYATDVIFPPPSSSAHSDADVNAGESSVAAVGTGGEDAKTKKKLETRLNALTADLLIIAKQAGFDVFNALTLLDNNMFLQEQKFGPGDGYLNYYLYNWNCAPIDGGQHSTTAKQGSKIGVVML.

45 to 48 (HKFW) contributes to the tetradecanoyl-CoA binding site. The disordered stretch occupies residues 53–79 (VPQITGSGASAPMEEGPIDDPKTPADV). Residues 182–184 (LCV) and 190–194 (SKRLA) contribute to the tetradecanoyl-CoA site. Leucine 491 functions as the Proton acceptor; via carboxylate in the catalytic mechanism.

This sequence belongs to the NMT family. In terms of assembly, monomer.

Its subcellular location is the cytoplasm. The catalysed reaction is N-terminal glycyl-[protein] + tetradecanoyl-CoA = N-tetradecanoylglycyl-[protein] + CoA + H(+). Its function is as follows. Adds a myristoyl group to the N-terminal glycine residue of certain cellular proteins. The protein is Glycylpeptide N-tetradecanoyltransferase of Cryptococcus neoformans (Filobasidiella neoformans).